Reading from the N-terminus, the 822-residue chain is Dimethyl sulfoxide/trimethylamine N-oxide reductase (822 aa).

The tat-type signal signal peptide spans 1–42 (MTKLSGQELHAELSRRAFLSYTAAVGALGLCGTSLLAQGARA). Residues tryptophan 158, 158–160 (WKS), serine 189, 232–233 (KT), 262–263 (IN), 283–285 (QTD), 364–365 (WS), arginine 368, asparagine 476, histidine 480, 500–501 (QD), arginine 523, aspartate 553, 683–686 (ASHP), arginine 689, 691–693 (HSQ), asparagine 779, and 796–797 (GQ) each bind Mo-bis(molybdopterin guanine dinucleotide).

Belongs to the prokaryotic molybdopterin-containing oxidoreductase family. Homodimer. The cofactor is Mo-bis(molybdopterin guanine dinucleotide). In terms of processing, predicted to be exported by the Tat system. The position of the signal peptide cleavage has been experimentally proven.

It localises to the periplasm. The catalysed reaction is dimethyl sulfide + a menaquinone + H2O = dimethyl sulfoxide + a menaquinol. It catalyses the reaction trimethylamine + 2 Fe(III)-[cytochrome c] + H2O = trimethylamine N-oxide + 2 Fe(II)-[cytochrome c] + 3 H(+). Its function is as follows. Catalyzes the reduction of dimethyl sulfoxide (DMSO) and trimethylamine N-oxide (TMAO) to dimethyl sulfide (DMS) and trimethylamine, respectively. The terminal DMSO reductase can also use various sulfoxides and N-oxide compounds as terminal electron acceptor in addition to DMSO and TMAO. In Cereibacter sphaeroides (Rhodobacter sphaeroides), this protein is Dimethyl sulfoxide/trimethylamine N-oxide reductase (dmsA).